A 58-amino-acid chain; its full sequence is MKLSPATKSFIGKTVDISTFAIQWGFVPFVVYLGFKKGAEPMPNGQILPLSAMSLLWG.

Topologically, residues 1–16 are cytoplasmic; sequence MKLSPATKSFIGKTVD. Residues 17 to 35 form a helical membrane-spanning segment; that stretch reads ISTFAIQWGFVPFVVYLGF. Residues 36–58 lie on the Mitochondrial intermembrane side of the membrane; that stretch reads KKGAEPMPNGQILPLSAMSLLWG.

Belongs to the Tom7 family. Forms part of the preprotein translocase complex of the outer mitochondrial membrane (TOM complex).

It is found in the mitochondrion outer membrane. This chain is Mitochondrial import receptor subunit TOM7 homolog (tomm-7), found in Caenorhabditis elegans.